Reading from the N-terminus, the 65-residue chain is Large ribosomal subunit protein bL35 (65 aa).

The segment at 30–65 is disordered; it reads AFRSHLAQNKSTKQKRQSKHGTFMHPTDYKRLKDLM. Positions 56–65 are enriched in basic and acidic residues; that stretch reads TDYKRLKDLM.

The protein belongs to the bacterial ribosomal protein bL35 family.

This is Large ribosomal subunit protein bL35 from Mycoplasma mobile (strain ATCC 43663 / 163K / NCTC 11711) (Mesomycoplasma mobile).